The following is a 199-amino-acid chain: Elongation factor Ts (199 aa).

Residues Thr82 to Val85 form an involved in Mg(2+) ion dislocation from EF-Tu region.

The protein belongs to the EF-Ts family.

It is found in the cytoplasm. Associates with the EF-Tu.GDP complex and induces the exchange of GDP to GTP. It remains bound to the aminoacyl-tRNA.EF-Tu.GTP complex up to the GTP hydrolysis stage on the ribosome. In Leptospira interrogans serogroup Icterohaemorrhagiae serovar Lai (strain 56601), this protein is Elongation factor Ts.